The primary structure comprises 670 residues: Cyclic di-GMP phosphodiesterase PdeA (670 aa).

The 243-residue stretch at glutamine 428–isoleucine 670 folds into the EAL domain.

The catalysed reaction is 3',3'-c-di-GMP + H2O = 5'-phosphoguanylyl(3'-&gt;5')guanosine + H(+). In terms of biological role, phosphodiesterase (PDE) that catalyzes the hydrolysis of cyclic diguanylate (c-di-GMP) to pGpG. The chain is Cyclic di-GMP phosphodiesterase PdeA from Borreliella burgdorferi (strain ATCC 35210 / DSM 4680 / CIP 102532 / B31) (Borrelia burgdorferi).